The sequence spans 924 residues: Isoleucine--tRNA ligase (924 aa).

Residues 57–67 carry the 'HIGH' region motif; it reads PYANGDIHMGH. Residue Glu552 participates in L-isoleucyl-5'-AMP binding. A 'KMSKS' region motif is present at residues 593–597; the sequence is KMSKS. Lys596 is a binding site for ATP. 4 residues coordinate Zn(2+): Cys891, Cys894, Cys911, and Cys914.

It belongs to the class-I aminoacyl-tRNA synthetase family. IleS type 1 subfamily. As to quaternary structure, monomer. Requires Zn(2+) as cofactor.

The protein localises to the cytoplasm. The enzyme catalyses tRNA(Ile) + L-isoleucine + ATP = L-isoleucyl-tRNA(Ile) + AMP + diphosphate. Functionally, catalyzes the attachment of isoleucine to tRNA(Ile). As IleRS can inadvertently accommodate and process structurally similar amino acids such as valine, to avoid such errors it has two additional distinct tRNA(Ile)-dependent editing activities. One activity is designated as 'pretransfer' editing and involves the hydrolysis of activated Val-AMP. The other activity is designated 'posttransfer' editing and involves deacylation of mischarged Val-tRNA(Ile). This chain is Isoleucine--tRNA ligase, found in Geobacillus thermodenitrificans (strain NG80-2).